A 283-amino-acid polypeptide reads, in one-letter code: NAD kinase (283 aa).

D68 functions as the Proton acceptor in the catalytic mechanism. NAD(+) contacts are provided by residues 68–69 (DG), R73, 142–143 (ND), R153, R170, D172, and 183–188 (TAYSLS).

This sequence belongs to the NAD kinase family. The cofactor is a divalent metal cation.

It is found in the cytoplasm. The enzyme catalyses NAD(+) + ATP = ADP + NADP(+) + H(+). Its function is as follows. Involved in the regulation of the intracellular balance of NAD and NADP, and is a key enzyme in the biosynthesis of NADP. Catalyzes specifically the phosphorylation on 2'-hydroxyl of the adenosine moiety of NAD to yield NADP. The protein is NAD kinase of Symbiobacterium thermophilum (strain DSM 24528 / JCM 14929 / IAM 14863 / T).